Here is a 293-residue protein sequence, read N- to C-terminus: Caspase-6 (293 aa).

The disordered stretch occupies residues 1-20 (MSSEPPPRRARGPGEEQNMT). The propeptide occupies 1–23 (MSSEPPPRRARGPGEEQNMTEID). The interval 42-44 (KRR) is tri-arginine exosite. S79 bears the Phosphoserine mark. The active site involves H121. Residues 125 to 142 (NHIYAYDAKIEIQTLTGL) are 130's region. Residue C163 is part of the active site. The propeptide occupies 180 to 193 (HRTDTPDANLTQVD). S257 is subject to Phosphoserine. Residues C264 and C277 are each lipidated (S-palmitoyl cysteine).

It belongs to the peptidase C14A family. As to quaternary structure, heterotetramer that consists of two anti-parallel arranged heterodimers, each one formed by a 18 kDa (p18) and a 11 kDa (p11) subunits. Interacts with BIRC6/bruce. Interacts with RIPK3. In terms of assembly, heterotetramer that consists of two anti-parallel arranged heterodimers, each one formed by a 18 kDa (Caspase-6 subunit p18) and a 11 kDa (Caspase-6 subunit p11) subunit. Phosphorylated by NUAK1; phosphorylation inhibits self-activation. Phosphorylation at Ser-257 by AMP-activated protein kinase (PRKAA1 or PRKAA2) inhibits autocleavage, preventing caspase activation, thereby preventing hepatocyte apoptosis. Post-translationally, palmitoylation by ZDHHC17 blocks dimerization and subsequent activation, leading to inhibit the cysteine protease activity. In terms of processing, can be cleaved and activated by different caspases, depending on the context. Cleaved and activated by caspase-8 (CASP8) and subsequently by caspase-3 (CASP3). Can also undergo autoactivation by mediating autocleavage at Asp-179 and Asp-193, while it is not able to cleave its N-terminal disordered prodomain. Cleaved and activated by CASP1, possibly in the context of inflammation.

Its subcellular location is the cytoplasm. It localises to the nucleus. The enzyme catalyses Strict requirement for Asp at position P1 and has a preferred cleavage sequence of Val-Glu-His-Asp-|-.. Its activity is regulated as follows. During activation, the N-terminal disordered prodomain is removed by cleavage. Concomitantly, double cleavage gives rise to a large 18-kDa and a small 11-kDa subunit. The two large and two small subunits then assemble to form the active CASP6 complex. Can be cleaved and activated by different caspases, depending on the context. Cleaved and activated by caspase-8 (CASP8) and subsequently by caspase-3 (CASP3). Can also undergo autoactivation by mediating autocleavage at Asp-179 and Asp-193, while it is not able to cleave its N-terminal disordered prodomain. Intramolecular cleavage at Asp-193 is a prerequisite for CASP6 self-activation. Cleaved and activated by CASP1 in neurons, possibly in the context of inflammation. Phosphorylation at Ser-257 inhibits autocleavage, preventing caspase activation. Functionally, cysteine protease that plays essential roles in programmed cell death, axonal degeneration, development and innate immunity. Acts as a non-canonical executioner caspase during apoptosis: localizes in the nucleus and cleaves the nuclear structural protein NUMA1 and lamin A/LMNA thereby inducing nuclear shrinkage and fragmentation. Lamin-A/LMNA cleavage is required for chromatin condensation and nuclear disassembly during apoptotic execution. Acts as a regulator of liver damage by promoting hepatocyte apoptosis: in absence of phosphorylation by AMP-activated protein kinase (AMPK), catalyzes cleavage of BID, leading to cytochrome c release, thereby participating in nonalcoholic steatohepatitis. Cleaves PARK7/DJ-1 in cells undergoing apoptosis. Involved in intrinsic apoptosis by mediating cleavage of RIPK1. Furthermore, cleaves many transcription factors such as NF-kappa-B and cAMP response element-binding protein/CREBBP. Cleaves phospholipid scramblase proteins XKR4 and XKR9. In addition to apoptosis, involved in different forms of programmed cell death. Plays an essential role in defense against viruses by acting as a central mediator of the ZBP1-mediated pyroptosis, apoptosis, and necroptosis (PANoptosis), independently of its cysteine protease activity. PANoptosis is a unique inflammatory programmed cell death, which provides a molecular scaffold that allows the interactions and activation of machinery required for inflammasome/pyroptosis, apoptosis and necroptosis. Mechanistically, interacts with RIPK3 and enhances the interaction between RIPK3 and ZBP1, leading to ZBP1-mediated inflammasome activation and cell death. Plays an essential role in axon degeneration during axon pruning which is the remodeling of axons during neurogenesis but not apoptosis. Regulates B-cell programs both during early development and after antigen stimulation. This is Caspase-6 from Bos taurus (Bovine).